We begin with the raw amino-acid sequence, 284 residues long: D-tagatose-1,6-bisphosphate aldolase subunit GatY (284 aa).

D82 functions as the Proton donor in the catalytic mechanism. Zn(2+) is bound by residues H83 and H180. G181 serves as a coordination point for dihydroxyacetone phosphate. Residue H208 participates in Zn(2+) binding. Residues 209–211 (GAS) and 230–233 (NVAT) each bind dihydroxyacetone phosphate.

Belongs to the class II fructose-bisphosphate aldolase family. TagBP aldolase GatY subfamily. Forms a complex with GatZ. Zn(2+) serves as cofactor.

The catalysed reaction is D-tagatofuranose 1,6-bisphosphate = D-glyceraldehyde 3-phosphate + dihydroxyacetone phosphate. The protein operates within carbohydrate metabolism; D-tagatose 6-phosphate degradation; D-glyceraldehyde 3-phosphate and glycerone phosphate from D-tagatose 6-phosphate: step 2/2. Its function is as follows. Catalytic subunit of the tagatose-1,6-bisphosphate aldolase GatYZ, which catalyzes the reversible aldol condensation of dihydroxyacetone phosphate (DHAP or glycerone-phosphate) with glyceraldehyde 3-phosphate (G3P) to produce tagatose 1,6-bisphosphate (TBP). Requires GatZ subunit for full activity and stability. Is involved in the catabolism of galactitol. The sequence is that of D-tagatose-1,6-bisphosphate aldolase subunit GatY from Escherichia coli (strain 55989 / EAEC).